Here is a 477-residue protein sequence, read N- to C-terminus: UDP-N-acetylmuramate--L-alanine ligase (477 aa).

An ATP-binding site is contributed by 112-118 (GTHGKTT).

Belongs to the MurCDEF family.

The protein resides in the cytoplasm. The catalysed reaction is UDP-N-acetyl-alpha-D-muramate + L-alanine + ATP = UDP-N-acetyl-alpha-D-muramoyl-L-alanine + ADP + phosphate + H(+). Its pathway is cell wall biogenesis; peptidoglycan biosynthesis. Cell wall formation. The chain is UDP-N-acetylmuramate--L-alanine ligase from Cupriavidus necator (strain ATCC 17699 / DSM 428 / KCTC 22496 / NCIMB 10442 / H16 / Stanier 337) (Ralstonia eutropha).